We begin with the raw amino-acid sequence, 110 residues long: Ribonuclease (110 aa).

The active-site Proton acceptor is E73. Catalysis depends on H102, which acts as the Proton donor.

Belongs to the ribonuclease N1/T1 family.

The protein localises to the secreted. In terms of biological role, hydrolyzes phosphodiester bonds in RNA, poly- and oligoribonucleotides resulting in 3'-nucleoside monophosphates via 2',3'-cyclophosphate intermediates. In Niallia circulans (Bacillus circulans), this protein is Ribonuclease.